Consider the following 190-residue polypeptide: Peptide methionine sulfoxide reductase MsrA (190 aa).

The active site involves C21.

Belongs to the MsrA Met sulfoxide reductase family.

It carries out the reaction L-methionyl-[protein] + [thioredoxin]-disulfide + H2O = L-methionyl-(S)-S-oxide-[protein] + [thioredoxin]-dithiol. It catalyses the reaction [thioredoxin]-disulfide + L-methionine + H2O = L-methionine (S)-S-oxide + [thioredoxin]-dithiol. In terms of biological role, has an important function as a repair enzyme for proteins that have been inactivated by oxidation. Catalyzes the reversible oxidation-reduction of methionine sulfoxide in proteins to methionine. This chain is Peptide methionine sulfoxide reductase MsrA, found in Polynucleobacter asymbioticus (strain DSM 18221 / CIP 109841 / QLW-P1DMWA-1) (Polynucleobacter necessarius subsp. asymbioticus).